Reading from the N-terminus, the 263-residue chain is Glutamate 5-kinase (263 aa).

Residue K14 coordinates ATP. S52, D137, and N149 together coordinate substrate. ATP is bound by residues 169–170 (SD) and 211–217 (TGGIVTK).

The protein belongs to the glutamate 5-kinase family. In terms of assembly, homotetramer; oligomerization is not affected by L-proline feedback inhibition. Requires Mg(2+) as cofactor.

The enzyme catalyses L-glutamate + ATP = L-glutamyl 5-phosphate + ADP. It participates in amino-acid biosynthesis; L-proline biosynthesis; L-glutamate 5-semialdehyde from L-glutamate: step 1/2. Inhibited by L-proline as part of a negative feedback loop. Also inhibited by L-proline analogs 3,4-dehydro-L-proline, L-azetidine-2-carboxylic acid and L-4-thiazolidine carboxylic acid. Catalyzes the transfer of a phosphate group to glutamate to form L-glutamate 5-phosphate. May be important for growth and survival. This is Glutamate 5-kinase from Leishmania donovani.